The sequence spans 267 residues: Thiazole synthase (267 aa).

Lys-101 (schiff-base intermediate with DXP) is an active-site residue. Residues Gly-162, Ala-188–Gly-189, and Asn-210–Thr-211 each bind 1-deoxy-D-xylulose 5-phosphate. Residues His-247–Val-267 are disordered.

The protein belongs to the ThiG family. As to quaternary structure, homotetramer. Forms heterodimers with either ThiH or ThiS.

It is found in the cytoplasm. The catalysed reaction is [ThiS sulfur-carrier protein]-C-terminal-Gly-aminoethanethioate + 2-iminoacetate + 1-deoxy-D-xylulose 5-phosphate = [ThiS sulfur-carrier protein]-C-terminal Gly-Gly + 2-[(2R,5Z)-2-carboxy-4-methylthiazol-5(2H)-ylidene]ethyl phosphate + 2 H2O + H(+). It functions in the pathway cofactor biosynthesis; thiamine diphosphate biosynthesis. Functionally, catalyzes the rearrangement of 1-deoxy-D-xylulose 5-phosphate (DXP) to produce the thiazole phosphate moiety of thiamine. Sulfur is provided by the thiocarboxylate moiety of the carrier protein ThiS. In vitro, sulfur can be provided by H(2)S. This Deinococcus geothermalis (strain DSM 11300 / CIP 105573 / AG-3a) protein is Thiazole synthase.